The sequence spans 397 residues: MSALTLTASKNTQTMTLDLPLLGSALALAAIGLIMVTSASVDFADDANGQALYYMWRHLTYLLAGVAVGFVILRLPLEWWHKQSWLLLVVALGFLVAVLIPGIGRTVNGSTRWISLGVINIQASEIAKVCLAIYTASYLVRRLDEVRGSWWGFAKPLLVLMLVALLLLMEPDFGALVVTMCAVVGMIFLSGVALSRFAALLMFCVGSVALLAVSQPYRLKRLTAYTDPWADQFDSGYQLTQALIAFGRGEWSGVGLGNSVQKLFYLPEAHTDFVFAIIAEELGLLGSLLIIVLFGVLLWRGMYVSRVAERAGQLFNAYAGYGVTLLLGGQALINLGVNTGLLPTKGLTLPLISYGGSSLIISCLCVAILLRIGSEAVSGEQTEDESPKVKNRGGAQR.

Topologically, residues Met1–Asp18 are cytoplasmic. The chain crosses the membrane as a helical span at residues Leu19 to Ala39. Residues Ser40–His58 are Periplasmic-facing. The helical transmembrane segment at Leu59 to Trp79 threads the bilayer. Residues Trp80–Gln83 are Cytoplasmic-facing. Residues Ser84 to Gly104 traverse the membrane as a helical segment. The Periplasmic segment spans residues Arg105–Arg112. The chain crosses the membrane as a helical span at residues Trp113 to Ile133. The Cytoplasmic segment spans residues Tyr134–Gly148. A helical membrane pass occupies residues Ser149–Met169. Residues Glu170–Asp172 are Periplasmic-facing. The helical transmembrane segment at Phe173–Ala193 threads the bilayer. The Cytoplasmic segment spans residues Leu194–Arg196. Residues Phe197 to Tyr217 traverse the membrane as a helical segment. The Periplasmic segment spans residues Arg218–Asp272. A helical membrane pass occupies residues Phe273 to Leu293. Residues Phe294 to Asn316 are Cytoplasmic-facing. Residues Ala317–Val337 form a helical membrane-spanning segment. Residues Asn338–Thr348 are Periplasmic-facing. Residues Leu349–Leu369 form a helical membrane-spanning segment. The Cytoplasmic portion of the chain corresponds to Leu370–Arg397.

This sequence belongs to the SEDS family. FtsW subfamily.

Its subcellular location is the cell inner membrane. The enzyme catalyses [GlcNAc-(1-&gt;4)-Mur2Ac(oyl-L-Ala-gamma-D-Glu-L-Lys-D-Ala-D-Ala)](n)-di-trans,octa-cis-undecaprenyl diphosphate + beta-D-GlcNAc-(1-&gt;4)-Mur2Ac(oyl-L-Ala-gamma-D-Glu-L-Lys-D-Ala-D-Ala)-di-trans,octa-cis-undecaprenyl diphosphate = [GlcNAc-(1-&gt;4)-Mur2Ac(oyl-L-Ala-gamma-D-Glu-L-Lys-D-Ala-D-Ala)](n+1)-di-trans,octa-cis-undecaprenyl diphosphate + di-trans,octa-cis-undecaprenyl diphosphate + H(+). The protein operates within cell wall biogenesis; peptidoglycan biosynthesis. Its function is as follows. Peptidoglycan polymerase that is essential for cell division. This chain is Probable peptidoglycan glycosyltransferase FtsW, found in Hahella chejuensis (strain KCTC 2396).